The chain runs to 316 residues: tRNA dimethylallyltransferase (316 aa).

17–24 lines the ATP pocket; it reads GPTASGKT. Position 19–24 (19–24) interacts with substrate; that stretch reads TASGKT. Interaction with substrate tRNA stretches follow at residues 42 to 45, 166 to 170, 247 to 252, and 280 to 287; these read DSAL, QRLSR, RCVGYR, and KRQITWLR.

It belongs to the IPP transferase family. In terms of assembly, monomer. The cofactor is Mg(2+).

It carries out the reaction adenosine(37) in tRNA + dimethylallyl diphosphate = N(6)-dimethylallyladenosine(37) in tRNA + diphosphate. Functionally, catalyzes the transfer of a dimethylallyl group onto the adenine at position 37 in tRNAs that read codons beginning with uridine, leading to the formation of N6-(dimethylallyl)adenosine (i(6)A). The polypeptide is tRNA dimethylallyltransferase (Escherichia coli O157:H7).